The following is a 485-amino-acid chain: Pelle-like serine/threonine-protein kinase pik-1 (485 aa).

A compositionally biased stretch (polar residues) spans 115–132 (TSRVSKQMVQPPGSQSAS). Positions 115-155 (TSRVSKQMVQPPGSQSASRLKKTEIKESSPSPAAAAASQLS) are disordered. Over residues 142 to 152 (SSPSPAAAAAS) the composition is skewed to low complexity. The region spanning 185 to 485 (FAVSNVIGKG…LCKNSIPPVV (301 aa)) is the Protein kinase domain. ATP-binding positions include 191-199 (IGKGGYGTV) and K214. Residue D318 is the Proton acceptor of the active site.

Belongs to the protein kinase superfamily. TKL Ser/Thr protein kinase family. Pelle subfamily. In terms of assembly, interacts with actl-1. Expressed in the nervous system.

The catalysed reaction is L-seryl-[protein] + ATP = O-phospho-L-seryl-[protein] + ADP + H(+). The enzyme catalyses L-threonyl-[protein] + ATP = O-phospho-L-threonyl-[protein] + ADP + H(+). In terms of biological role, through association with the adapter actl-1, may act downstream of the receptor complex composed of ilcr-1 and ilcr-2, which is a signaling complex that modulates neuronal activity and animal behavior in response to sensory neuron input. This is Pelle-like serine/threonine-protein kinase pik-1 from Caenorhabditis elegans.